The following is an 828-amino-acid chain: Glycerol-3-phosphate acyltransferase (828 aa).

Residues 309 to 314 carry the HXXXXD motif motif; that stretch reads CHRSHI.

The protein belongs to the GPAT/DAPAT family.

The protein resides in the cell inner membrane. It catalyses the reaction sn-glycerol 3-phosphate + an acyl-CoA = a 1-acyl-sn-glycero-3-phosphate + CoA. The protein operates within phospholipid metabolism; CDP-diacylglycerol biosynthesis; CDP-diacylglycerol from sn-glycerol 3-phosphate: step 1/3. The polypeptide is Glycerol-3-phosphate acyltransferase (Pseudomonas entomophila (strain L48)).